The following is a 106-amino-acid chain: Probable insulin-like peptide beta-type 2 (106 aa).

Positions 1-15 (MNAIIFCLLFTTVTA) are cleaved as a signal peptide. Residues 16-56 (TYEVFGKGIEHRNEHLIINQLDIIPVESTPTPNRASRVQKR) constitute a propeptide that is removed on maturation. 4 disulfides stabilise this stretch: C58–C86, C70–C99, C73–C100, and C85–C90.

This sequence belongs to the insulin family.

Its subcellular location is the secreted. The sequence is that of Probable insulin-like peptide beta-type 2 (ins-2) from Caenorhabditis elegans.